The following is a 181-amino-acid chain: uncharacterized protein (181 aa).

This is an uncharacterized protein from Escherichia coli (strain K12).